Reading from the N-terminus, the 183-residue chain is Potassium-transporting ATPase KdpC subunit (183 aa).

Residues 10–30 (ASLLVLSLVTGVAYPLLVTGI) form a helical membrane-spanning segment.

This sequence belongs to the KdpC family. As to quaternary structure, the system is composed of three essential subunits: KdpA, KdpB and KdpC.

Its subcellular location is the cell inner membrane. Part of the high-affinity ATP-driven potassium transport (or Kdp) system, which catalyzes the hydrolysis of ATP coupled with the electrogenic transport of potassium into the cytoplasm. This subunit acts as a catalytic chaperone that increases the ATP-binding affinity of the ATP-hydrolyzing subunit KdpB by the formation of a transient KdpB/KdpC/ATP ternary complex. The sequence is that of Potassium-transporting ATPase KdpC subunit from Pseudomonas aeruginosa (strain UCBPP-PA14).